We begin with the raw amino-acid sequence, 1051 residues long: Kinesin-like protein KIN-4B (1051 aa).

The interval methionine 1–serine 21 is disordered. One can recognise a Kinesin motor domain in the interval cysteine 25 to isoleucine 380. Glycine 104–threonine 111 lines the ATP pocket. Coiled-coil stretches lie at residues alanine 414–arginine 448 and arginine 540–glutamine 644. The span at serine 916 to serine 925 shows a compositional bias: low complexity. Disordered stretches follow at residues serine 916–tyrosine 946 and methionine 1029–alanine 1051.

This sequence belongs to the TRAFAC class myosin-kinesin ATPase superfamily. Kinesin family. KIN-4 subfamily. In terms of assembly, homodimer.

Functionally, kinesin-like motor protein involved in the control of the oriented deposition of cellulose microfibrils. In Arabidopsis thaliana (Mouse-ear cress), this protein is Kinesin-like protein KIN-4B.